The following is a 254-amino-acid chain: Pyruvate dehydrogenase complex repressor (254 aa).

Positions 9–77 (PKLSDVIEQQ…QGGGTFVQSS (69 aa)) constitute an HTH gntR-type domain. Positions 37-56 (ERELAKQFDVSRPSLREAIQ) form a DNA-binding region, H-T-H motif.

Transcriptional repressor for the pyruvate dehydrogenase complex genes aceEF and lpd. The sequence is that of Pyruvate dehydrogenase complex repressor (pdhR) from Salmonella typhi.